We begin with the raw amino-acid sequence, 208 residues long: Protein-L-isoaspartate O-methyltransferase (208 aa).

Residue Ser-59 is part of the active site.

The protein belongs to the methyltransferase superfamily. L-isoaspartyl/D-aspartyl protein methyltransferase family.

Its subcellular location is the cytoplasm. The enzyme catalyses [protein]-L-isoaspartate + S-adenosyl-L-methionine = [protein]-L-isoaspartate alpha-methyl ester + S-adenosyl-L-homocysteine. Its function is as follows. Catalyzes the methyl esterification of L-isoaspartyl residues in peptides and proteins that result from spontaneous decomposition of normal L-aspartyl and L-asparaginyl residues. It plays a role in the repair and/or degradation of damaged proteins. This chain is Protein-L-isoaspartate O-methyltransferase, found in Escherichia coli O1:K1 / APEC.